We begin with the raw amino-acid sequence, 620 residues long: Nuclear cap-binding protein subunit 3 (620 aa).

A Glycyl lysine isopeptide (Lys-Gly) (interchain with G-Cter in SUMO2) cross-link involves residue K12. Residues 15–28 (APAGPALGLPSPEA) are compositionally biased toward low complexity. Residues 15–42 (APAGPALGLPSPEAESGVDRGEPEPMEV) form a disordered region. S25 carries the phosphoserine modification. Residue K70 forms a Glycyl lysine isopeptide (Lys-Gly) (interchain with G-Cter in SUMO2) linkage. At S73 the chain carries Phosphoserine. The interval 126–187 (ETIYICGVDE…MSSLPAQDKI (62 aa)) is RNA recognition motif (RRM) domain. The short motif at 155–158 (WLDD) is the WLDD motif; essential for 7-methylguanosine-containing mRNA cap binding element. Basic and acidic residues predominate over residues 185–198 (DKIRSRDASEDKSA). Disordered regions lie at residues 185–233 (DKIR…LDTL), 332–419 (HSGL…PKKS), and 436–620 (IRNS…EAES). K186 is covalently cross-linked (Glycyl lysine isopeptide (Lys-Gly) (interchain with G-Cter in SUMO2)). Phosphoserine is present on residues S209 and S210. Composition is skewed to acidic residues over residues 209 to 230 (SSDD…DVEL) and 341 to 365 (EPIE…DMDA). Residues 366 to 388 (DDRVVVEYHEELPALKQPRERSA) show a composition bias toward basic and acidic residues. The residue at position 413 (T413) is a Phosphothreonine. Phosphoserine is present on S415. 2 stretches are compositionally biased toward basic and acidic residues: residues 459-474 (PPEK…DEKR) and 511-521 (VRREPSSDVHS). K541 participates in a covalent cross-link: Glycyl lysine isopeptide (Lys-Gly) (interchain with G-Cter in SUMO2). Basic and acidic residues-rich tracts occupy residues 554 to 569 (KTKE…RAPG) and 585 to 598 (IKEK…KSRL). The span at 611–620 (ESSSGSEAES) shows a compositional bias: low complexity. A Phosphoserine modification is found at S620.

It belongs to the NCBP3 family. In terms of assembly, component of an alternative cap-binding complex (CBC) composed of NCBP1/CBP80 and NCBP3. Interacts with SRRT, KPNA3, THOC5 and EIF4A3.

The protein localises to the nucleus. It is found in the cytoplasm. Associates with NCBP1/CBP80 to form an alternative cap-binding complex (CBC) which plays a key role in mRNA export. NCBP3 serves as adapter protein linking the capped RNAs (m7GpppG-capped RNA) to NCBP1/CBP80. Unlike the conventional CBC with NCBP2 which binds both small nuclear RNA (snRNA) and messenger (mRNA) and is involved in their export from the nucleus, the alternative CBC with NCBP3 does not bind snRNA and associates only with mRNA thereby playing a role in only mRNA export. The alternative CBC is particularly important in cellular stress situations such as virus infections and the NCBP3 activity is critical to inhibit virus growth. In Homo sapiens (Human), this protein is Nuclear cap-binding protein subunit 3.